We begin with the raw amino-acid sequence, 908 residues long: Probable RNA-directed DNA polymerase from transposon X-element (908 aa).

Residues 481 to 752 (AIVRLQYFPY…NAAKYLGVLL (272 aa)) enclose the Reverse transcriptase domain. The interval 883-908 (RPPRRLNRRQPRDLITRSPLTRVRRS) is disordered.

Mg(2+) is required as a cofactor. Mn(2+) serves as cofactor.

The enzyme catalyses DNA(n) + a 2'-deoxyribonucleoside 5'-triphosphate = DNA(n+1) + diphosphate. This Drosophila melanogaster (Fruit fly) protein is Probable RNA-directed DNA polymerase from transposon X-element (X-element\ORF2).